Reading from the N-terminus, the 659-residue chain is MAAFSKYLTARNSSLAGAAFLLFCLLHKRRRALGLHGKKSGKPPLQNNEKEGKKERAVVDKVFLSRLSQILKIMVPRTFCKETGYLILIAVMLVSRTYCDVWMIQNGTLIESGIIGRSSKDFKRYLFNFIAAMPLISLVNNFLKYGLNELKLCFRVRLTRYLYEEYLQAFTYYKMGNLDNRIANPDQLLTQDVEKFCNSVVDLYSNLSKPFLDIVLYIFKLTSAIGAQGPASMMAYLLVSGLFLTRLRRPIGKMTIMEQKYEGEYRFVNSRLITNSEEIAFYNGNKREKQTIHSVFRKLVEHLHNFIFFRFSMGFIDSIIAKYIATVVGYLVVSRPFLDLAHPRHLHSTHSELLEDYYQSGRMLLRMSQALGRIVLAGREMTRLAGFTARITELMQVLKDLNHGKYERTMVSQQDKGIEGAQASPLIPGAGEIINADNIIKFDHVPLATPNGDILIQDLSFEVRSGANVLICGPNGCGKSSLFRVLGELWPLFGGHLTKPERGKLFYVPQRPYMTLGTLRDQVIYPDGKEDQKKKGISDQVLKGYLDNVQLGHILEREGGWDSVQDWMDVLSGGEKQRMAMARLFYHKPQFAILDECTSAVSVDVEDYIYSHCRKVGITLFTVSHRKSLWKHHEYYLHMDGRGNYEFKKITEDTVEFGS.

Positions 2 to 61 (AAFSKYLTARNSSLAGAAFLLFCLLHKRRRALGLHGKKSGKPPLQNNEKEGKKERAVVDK) are interaction with PEX19. An N-linked (GlcNAc...) asparagine glycan is attached at asparagine 12. N6-acetyllysine is present on lysine 61. A helical membrane pass occupies residues 84–104 (GYLILIAVMLVSRTYCDVWMI). The ABC transmembrane type-1 domain occupies 85–372 (YLILIAVMLV…MLLRMSQALG (288 aa)). The N-linked (GlcNAc...) asparagine glycan is linked to asparagine 106. Residues 126–146 (LFNFIAAMPLISLVNNFLKYG) form a helical membrane-spanning segment. Asparagine 206 is a glycosylation site (N-linked (GlcNAc...) asparagine). A helical membrane pass occupies residues 224–244 (AIGAQGPASMMAYLLVSGLFL). At lysine 260 the chain carries N6-acetyllysine. A helical membrane pass occupies residues 313–333 (MGFIDSIIAKYIATVVGYLVV). Lysine 399 is modified (N6-acetyllysine). Phosphoserine is present on serine 424. Positions 434–659 (INADNIIKFD…ITEDTVEFGS (226 aa)) constitute an ABC transporter domain. 473–480 (GPNGCGKS) lines the ATP pocket. Position 533 is an N6-acetyllysine (lysine 533). The residue at position 659 (serine 659) is a Phosphoserine.

The protein belongs to the ABC transporter superfamily. ABCD family. Peroxisomal fatty acyl CoA transporter (TC 3.A.1.203) subfamily. In terms of assembly, homodimers. Can form heterodimers with ABCD1 and ABCD2. Dimerization is necessary to form an active transporter. Interacts with PEX19; mediates the targeting of ABCD3 to peroxisomes. Post-translationally, ubiquitinated by PEX2 during pexophagy in response to starvation, leading to its degradation.

The protein resides in the peroxisome membrane. The enzyme catalyses a very long-chain fatty acyl-CoA + H2O = a very long-chain fatty acid + CoA + H(+). It carries out the reaction a very long-chain fatty acid(in) + ATP + H2O = a very long-chain fatty acid(out) + ADP + phosphate + H(+). The catalysed reaction is a long-chain fatty acyl-CoA + H2O = a long-chain fatty acid + CoA + H(+). It catalyses the reaction a long-chain fatty acid(in) + ATP + H2O = a long-chain fatty acid(out) + ADP + phosphate + H(+). The enzyme catalyses pristanoyl-CoA + H2O = 2,6,10,14-tetramethylpentadecanoate + CoA + H(+). It carries out the reaction 2,6,10,14-tetramethylpentadecanoate(in) + ATP + H2O = 2,6,10,14-tetramethylpentadecanoate(out) + ADP + phosphate + H(+). The catalysed reaction is hexadecanedioyl-CoA + H2O = hexadecanedioate + CoA + H(+). It catalyses the reaction hexadecanedioate(in) + ATP + H2O = hexadecanedioate(out) + ADP + phosphate + H(+). The enzyme catalyses (5Z,8Z,11Z,14Z,17Z)-eicosapentaenoyl-CoA + H2O = (5Z,8Z,11Z,14Z,17Z)-eicosapentaenoate + CoA + H(+). It carries out the reaction (5Z,8Z,11Z,14Z,17Z)-eicosapentaenoate(in) + ATP + H2O = (5Z,8Z,11Z,14Z,17Z)-eicosapentaenoate(out) + ADP + phosphate + H(+). The catalysed reaction is (4Z,7Z,10Z,13Z,16Z,19Z)-docosahexaenoyl-CoA + H2O = (4Z,7Z,10Z,13Z,16Z,19Z)-docosahexaenoate + CoA + H(+). It catalyses the reaction (4Z,7Z,10Z,13Z,16Z,19Z)-docosahexaenoate(in) + ATP + H2O = (4Z,7Z,10Z,13Z,16Z,19Z)-docosahexaenoate(out) + ADP + phosphate + H(+). Broad substrate specificity ATP-dependent transporter of the ATP-binding cassette (ABC) family that catalyzes the transport of long-chain fatty acids (LCFA)-CoA, dicarboxylic acids-CoA, long-branched-chain fatty acids-CoA and bile acids from the cytosol to the peroxisome lumen for beta-oxydation. Has fatty acyl-CoA thioesterase and ATPase activities. Probably hydrolyzes fatty acyl-CoAs into free fatty acids prior to their ATP-dependent transport into peroxisomes. Thus, play a role in regulation of LCFAs and energy metabolism namely, in the degradation and biosynthesis of fatty acids by beta-oxidation. This chain is ATP-binding cassette sub-family D member 3 (Abcd3), found in Rattus norvegicus (Rat).